The chain runs to 89 residues: MIDYIKSTVRNRNTIRLLEKNQYTFDVDPKATKTEVKRLIEGVFGVKVIGMNSKRLPIKQKRKGPTAGYAVRYKRMIVTLNSTDSIPVI.

The protein belongs to the universal ribosomal protein uL23 family. In terms of assembly, part of the 50S ribosomal subunit.

It localises to the plastid. It is found in the chloroplast. Functionally, binds to 23S rRNA. This chain is Large ribosomal subunit protein uL23c (rpl23), found in Zygnema circumcarinatum (Green alga).